An 89-amino-acid chain; its full sequence is Bombyxin B-1 (89 aa).

An N-terminal signal peptide occupies residues 1-19 (MKTSVMFMLVIVISLMCSG). 3 disulfide bridges follow: C29-C75, C41-C88, and C74-C79. Residues 48–66 (GGAQYAPYFWTRQYLGSRG) constitute a propeptide, c peptide like.

Belongs to the insulin family. In terms of assembly, heterodimer of a B chain and an A chain linked by two disulfide bonds.

The protein resides in the secreted. Brain peptide responsible for activation of prothoracic glands to produce ecdysone in insects. This Bombyx mori (Silk moth) protein is Bombyxin B-1 (BBXB1).